The following is a 464-amino-acid chain: Molybdate transporter 2 (464 aa).

The short motif at 8-9 (LL) is the Tonoplast targeting signal element. Transmembrane regions (helical) follow at residues 33–53 (LSGA…LTLV), 62–82 (LIFT…PMPV), 116–136 (LLLG…LPVV), 172–192 (IWLG…IILS), 223–243 (LLSS…LCFI), 309–329 (VSIS…MPVC), 348–368 (SVIF…NSFV), 374–394 (FPIG…AMAS), and 404–424 (FIML…LGFG).

This sequence belongs to the SLC26A/SulP transporter (TC 2.A.53) family. As to expression, expressed in leaves. Not detected in roots, shoots and seeds.

Its subcellular location is the vacuole membrane. Functionally, molybdate transporter required for vacuolar molybdate export during senescence. This is Molybdate transporter 2 (MOT2) from Arabidopsis thaliana (Mouse-ear cress).